The following is a 231-amino-acid chain: (S)-2-haloacid dehalogenase 4A (231 aa).

The Nucleophile role is filled by Asp11. Residues 12-13 (AY), Arg42, and 119-120 (SN) each bind an (S)-2-haloacid. The tract at residues 176–181 (SSNAWD) is important for catalytic activity.

The protein belongs to the HAD-like hydrolase superfamily. S-2-haloalkanoic acid dehalogenase family.

It catalyses the reaction an (S)-2-haloacid + H2O = a (2R)-2-hydroxycarboxylate + a halide anion + H(+). The enzyme catalyses (S)-2-chloropropanoate + H2O = (R)-lactate + chloride + H(+). Functionally, catalyzes the hydrolytic dehalogenation of small (S)-2-haloalkanoic acids to yield the corresponding (R)-2-hydroxyalkanoic acids. Acts on acids of short chain lengths, C(2) to C(4), with inversion of configuration at C-3. Active with 2-halogenated carboxylic acids and converts only the S-isomer (or L-isomer) of 2-chloropropionic acid with inversion of configuration to produce R-lactate (or D-isomer). This chain is (S)-2-haloacid dehalogenase 4A, found in Burkholderia cepacia (Pseudomonas cepacia).